We begin with the raw amino-acid sequence, 257 residues long: Pimeloyl-[acyl-carrier protein] methyl ester esterase (257 aa).

An AB hydrolase-1 domain is found at 16–242; sequence LVLLHGWGLN…AAHAPFISHP (227 aa). Residues tryptophan 22, 82–83, and 143–147 contribute to the substrate site; these read SL and FLGLQ. The active-site Nucleophile is the serine 82. Active-site residues include aspartate 207 and histidine 235. Histidine 235 is a binding site for substrate.

This sequence belongs to the AB hydrolase superfamily. Carboxylesterase BioH family. Monomer.

It localises to the cytoplasm. It catalyses the reaction 6-carboxyhexanoyl-[ACP] methyl ester + H2O = 6-carboxyhexanoyl-[ACP] + methanol + H(+). It participates in cofactor biosynthesis; biotin biosynthesis. Its function is as follows. The physiological role of BioH is to remove the methyl group introduced by BioC when the pimeloyl moiety is complete. It allows to synthesize pimeloyl-ACP via the fatty acid synthetic pathway through the hydrolysis of the ester bonds of pimeloyl-ACP esters. This Sodalis glossinidius (strain morsitans) protein is Pimeloyl-[acyl-carrier protein] methyl ester esterase.